Consider the following 949-residue polypeptide: Nonsense-mediated mRNA decay factor SMG8 (949 aa).

Disordered stretches follow at residues 564 to 607, 624 to 652, and 748 to 768; these read SGAR…LSPT, NESQ…DTEN, and PKQQ…QQRW. The segment covering 571-581 has biased composition (acidic residues); sequence EGDDEPEDEVV. Polar residues predominate over residues 594-607; the sequence is NTASNGCSQPLSPT. Positions 624–648 are enriched in low complexity; the sequence is NESQASSEQLSNSEQNTSSSGTSSA. Residues 749–768 show a composition bias toward basic residues; it reads KQQHHTHHQQQHPGKKQQRW.

This sequence belongs to the SMG8 family.

Involved in nonsense-mediated decay (NMD) of mRNAs containing premature stop codons. Probable component of kinase complex containing nonC and recruited to stalled ribosomes. In Drosophila erecta (Fruit fly), this protein is Nonsense-mediated mRNA decay factor SMG8.